The primary structure comprises 203 residues: Akirin-2 (203 aa).

Residues S18 and S21 each carry the phosphoserine modification. The Nuclear localization signal signature appears at 22-27 (PKRRRC). S57 carries the phosphoserine modification. The SYVS motif motif lies at 200–203 (SYVS).

It belongs to the akirin family. As to quaternary structure, homodimer. Interacts with IPO9; the interaction is direct. Associates with 20S and 26S proteasomes. Interacts with SMARCD1; promoting SWI/SNF complex recruitment. Interacts with NFKBIZ. Interacts with YWHAB. Post-translationally, polyubiquitinated. Polyubiquitination is dependent of UBR5 that extends pre-ubiquitinated AKIRIN2. In terms of tissue distribution, widely expressed. Most abundant in the lung, followed by the skeletal muscle, heart, liver, fat, thymus, lymph node, small intestine, kidney and spleen. In skeletal muscle, expressed at higher level in fast extensor digitorum longus (EDL) and longissimus lumborum (LL) muscles than in slow soleus (SOL) muscles.

It localises to the nucleus. The protein resides in the cytoplasm. The protein localises to the membrane. Molecular adapter that acts as a bridge between a variety of multiprotein complexes, and which is involved in embryonic development, immunity, myogenesis and brain development. Plays a key role in nuclear protein degradation by promoting import of proteasomes into the nucleus: directly binds to fully assembled 20S proteasomes at one end and to nuclear import receptor IPO9 at the other end, bridging them together and mediating the import of pre-assembled proteasome complexes through the nuclear pore. Involved in innate immunity by regulating the production of interleukin-6 (IL6) downstream of Toll-like receptor (TLR): acts by bridging the NF-kappa-B inhibitor NFKBIZ and the SWI/SNF complex, leading to promote induction of IL6. Also involved in adaptive immunity by promoting B-cell activation. Involved in brain development: required for the survival and proliferation of cerebral cortical progenitor cells. Involved in myogenesis: required for skeletal muscle formation and skeletal development, possibly by regulating expression of muscle differentiation factors. The protein is Akirin-2 of Sus scrofa (Pig).